Reading from the N-terminus, the 123-residue chain is Ribonuclease P protein component 1 (123 aa).

The disordered stretch occupies residues 73–93 (PDNGVGTAFKPAGGETRQTTG).

This sequence belongs to the eukaryotic/archaeal RNase P protein component 1 family. In terms of assembly, consists of a catalytic RNA component and at least 4-5 protein subunits.

Its subcellular location is the cytoplasm. It carries out the reaction Endonucleolytic cleavage of RNA, removing 5'-extranucleotides from tRNA precursor.. In terms of biological role, part of ribonuclease P, a protein complex that generates mature tRNA molecules by cleaving their 5'-ends. This chain is Ribonuclease P protein component 1, found in Halobacterium salinarum (strain ATCC 29341 / DSM 671 / R1).